The chain runs to 160 residues: Non-secretory ribonuclease (160 aa).

The signal sequence occupies residues 1 to 27 (MVPKLFTSPICLLLLLGLMGVEGSLHA). A C-linked (Man) tryptophan glycan is attached at W34. H42 acts as the Proton acceptor in catalysis. N44 carries an N-linked (GlcNAc...) asparagine glycan. Cystine bridges form between C50/C110, C64/C122, C82/C137, and C89/C98. Position 60 is a 3'-nitrotyrosine (Y60). 65–69 (KNQNT) contributes to the substrate binding site. N92, N111, and N138 each carry an N-linked (GlcNAc...) asparagine glycan. H155 functions as the Proton donor in the catalytic mechanism.

It belongs to the pancreatic ribonuclease family. Interacts with and forms a tight 1:1 complex with RNH1. Dimerization of two such complexes may occur.

It localises to the lysosome. It is found in the cytoplasmic granule. The catalysed reaction is an [RNA] containing cytidine + H2O = an [RNA]-3'-cytidine-3'-phosphate + a 5'-hydroxy-ribonucleotide-3'-[RNA].. The enzyme catalyses an [RNA] containing uridine + H2O = an [RNA]-3'-uridine-3'-phosphate + a 5'-hydroxy-ribonucleotide-3'-[RNA].. This is a non-secretory ribonuclease. It is a pyrimidine specific nuclease with a slight preference for U. Cytotoxin and helminthotoxin. Possesses a wide variety of biological activities. This is Non-secretory ribonuclease (RNASE2) from Papio hamadryas (Hamadryas baboon).